The following is a 670-amino-acid chain: Protein ACCELERATED CELL DEATH 6 (670 aa).

Residues 1–456 (MDSSGADLDR…PNYIFHERWT (456 aa)) lie on the Cytoplasmic side of the membrane. The tract at residues 18–47 (LVSHDQRKDFSHSGGVGTTSPTGDTEPVPK) is disordered. ANK repeat units follow at residues 66–95 (EMTP…PMER), 100–129 (TGDS…CLLF), 134–163 (SRQT…SALA), 182–211 (DGNT…DAPF), 216–248 (KGIS…NVDR), 260–290 (QGNK…SLMD), 295–325 (DGRT…GVYV), 329–358 (DGSF…ASKY), 363–391 (LGQN…DTKH), and 399–428 (DGNT…EILK). The helical transmembrane segment at 457–477 (LALLLYAIHSSGFESVKSLTI) threads the bilayer. The Extracellular portion of the chain corresponds to 478–492 (QSVPLDPKKNRHYVN). Residues 493–513 (ALLVVAALVATVTFAAGFTIP) form a helical membrane-spanning segment. Over 514 to 537 (GGYISDSKKPNLGRATLATNPTLF) the chain is Cytoplasmic. Residues 538–558 (IFLLFDILAMQSSVATICTLI) form a helical membrane-spanning segment. At 559 to 577 (WAQLGDLALILKSLHVALP) the chain is on the extracellular side. Residues 578–598 (LLLFSLLCMPVAFLFGVITAI) form a helical membrane-spanning segment. Residues 599 to 602 (AHVK) are Cytoplasmic-facing. A helical membrane pass occupies residues 603-623 (WLLVTISIISGGFFLFAIFIL). Residues 624-638 (GPHVMLQRSHLPPSS) lie on the Extracellular side of the membrane. The chain crosses the membrane as a helical span at residues 639-659 (GIFLKTFMLTIDISELFVILI). Over 660–670 (KACFGCVACSE) the chain is Cytoplasmic.

In terms of assembly, component of large complexes containing, at least, FLS2, HSP70 and ACD6 in endoplasmic reticulum, plasma membrane and soluble fraction. Associated with HSP70 proteins during endoplasmic reticulum-associated degradation (ERAD). Reduced complex levels upon benzothiazole (BTH) treatment. Ubiquitinated. As to expression, basal expression requires light and salicylic acid (SA).

It localises to the cell membrane. The protein resides in the endoplasmic reticulum membrane. Dose-dependent activator of the defense response against virulent pathogens, including bacteria, fungi and oomycetes, that acts in a positive feedback loop with the defense signal salicylic acid (SA). Regulates the salicylic acid (SA) signaling pathway leading to cell death and modulating cell fate (e.g. cell enlargement and/or cell division). In response to SA signaling, triggers the accumulation of FLS2 at the plasma membrane, thus priming defenses. Involved in SA-dependent freezing signaling and tolerance. The chain is Protein ACCELERATED CELL DEATH 6 from Arabidopsis thaliana (Mouse-ear cress).